Here is a 488-residue protein sequence, read N- to C-terminus: Protein Notchless (488 aa).

Positions 1 to 22 (MLAKKQKMQETDTEQEATPHTI) are disordered. The tract at residues 19-101 (PHTIQARLVS…VIDIVYQPQA (83 aa)) is ubiquitin-like (UBL) domain. 8 WD repeats span residues 117 to 156 (GHAE…PHFT), 159 to 198 (GHKQ…QKGR), 202 to 246 (GHKK…CLMN), 249 to 287 (GHTN…LCRT), 329 to 370 (LQES…CVER), 373 to 412 (GHQN…YMAT), 415 to 454 (GHVQ…LAQE), and 457 to 488 (GHAD…LWAY).

It belongs to the NLE1/RSA4 family. As to quaternary structure, interacts with Notch (via cytoplasmic domain). Associates with the pre-60S ribosomal particle.

The protein resides in the nucleus. It is found in the nucleolus. Functionally, plays a role in regulating Notch activity. The chain is Protein Notchless from Drosophila melanogaster (Fruit fly).